A 630-amino-acid chain; its full sequence is Probable potassium transport system protein Kup 1 (630 aa).

Helical transmembrane passes span 15–35 (FAAL…TSPL), 59–79 (LSLI…TFIM), 109–129 (WIMI…MVTP), 145–165 (PALK…LFFV), 173–193 (VGAF…LLGV), 223–243 (LVAM…YADM), 255–275 (WFAF…ALIL), 297–317 (LVGL…SGAF), 345–365 (IYLP…VLGF), 374–394 (AYGI…TVVV), 405–425 (AGLL…ANIL), and 427–447 (IPDG…LMTT).

Belongs to the HAK/KUP transporter (TC 2.A.72) family.

It is found in the cell inner membrane. The enzyme catalyses K(+)(in) + H(+)(in) = K(+)(out) + H(+)(out). In terms of biological role, transport of potassium into the cell. Likely operates as a K(+):H(+) symporter. This chain is Probable potassium transport system protein Kup 1, found in Dechloromonas aromatica (strain RCB).